The following is a 151-amino-acid chain: Putative pre-16S rRNA nuclease (151 aa).

Belongs to the YqgF nuclease family.

The protein localises to the cytoplasm. In terms of biological role, could be a nuclease involved in processing of the 5'-end of pre-16S rRNA. The protein is Putative pre-16S rRNA nuclease of Thermosynechococcus vestitus (strain NIES-2133 / IAM M-273 / BP-1).